Reading from the N-terminus, the 501-residue chain is Lysine--tRNA ligase (501 aa).

Mg(2+) is bound by residues Glu411 and Glu418.

This sequence belongs to the class-II aminoacyl-tRNA synthetase family. In terms of assembly, homodimer. Requires Mg(2+) as cofactor.

The protein localises to the cytoplasm. The catalysed reaction is tRNA(Lys) + L-lysine + ATP = L-lysyl-tRNA(Lys) + AMP + diphosphate. In Shewanella woodyi (strain ATCC 51908 / MS32), this protein is Lysine--tRNA ligase.